Reading from the N-terminus, the 109-residue chain is Nucleoid-associated protein Ssed_2851 (109 aa).

The protein belongs to the YbaB/EbfC family. As to quaternary structure, homodimer.

It localises to the cytoplasm. The protein localises to the nucleoid. Functionally, binds to DNA and alters its conformation. May be involved in regulation of gene expression, nucleoid organization and DNA protection. The protein is Nucleoid-associated protein Ssed_2851 of Shewanella sediminis (strain HAW-EB3).